Reading from the N-terminus, the 374-residue chain is Phosphate-binding protein PstS1 (374 aa).

An N-terminal signal peptide occupies residues 1–23; that stretch reads MKIRLHTLLAVLTAAPLLLAAAG. The N-palmitoyl cysteine moiety is linked to residue cysteine 24. The S-diacylglycerol cysteine moiety is linked to residue cysteine 24. The tract at residues 25–48 is disordered; the sequence is GSKPPSGSPETGAGAGTVATTPAS. Phosphate is bound by residues 58-60, serine 88, aspartate 106, and 189-191; these read STL and SGD.

Belongs to the PstS family. The complex is composed of two ATP-binding proteins (PstB), two transmembrane proteins (PstC and PstA) and a solute-binding protein (PstS).

It localises to the cell membrane. The protein localises to the secreted. Functionally, functions in inorganic phosphate uptake, a phosphate-binding protein, although probably not the main uptake protein under phosphate starvation. Part of the ABC transporter complex PstSACB involved in phosphate import. Its function is as follows. A host TLR2 agonist (toll-like receptor), requires both host TLR1 and TLR2 as coreceptors. This chain is Phosphate-binding protein PstS1 (pstS1), found in Mycobacterium bovis (strain BCG / Pasteur 1173P2).